The sequence spans 67 residues: Large ribosomal subunit protein uL29 (67 aa).

The protein belongs to the universal ribosomal protein uL29 family.

The sequence is that of Large ribosomal subunit protein uL29 from Clostridioides difficile (strain 630) (Peptoclostridium difficile).